The chain runs to 121 residues: Large ribosomal subunit protein uL14c (121 aa).

The protein belongs to the universal ribosomal protein uL14 family. Part of the 50S ribosomal subunit.

Its subcellular location is the plastid. It localises to the chloroplast. In terms of biological role, binds to 23S rRNA. The protein is Large ribosomal subunit protein uL14c of Phaeodactylum tricornutum (strain CCAP 1055/1).